A 353-amino-acid chain; its full sequence is Photosystem II protein D1 (353 aa).

Thr2 carries the N-acetylthreonine modification. Position 2 is a phosphothreonine (Thr2). A run of 3 helical transmembrane segments spans residues 29-46, 118-133, and 142-156; these read YIGW…TATS, HFFL…EWEL, and WIAV…AATA. Residue His118 coordinates chlorophyll a. Tyr126 provides a ligand contact to pheophytin a. Positions 170 and 189 each coordinate [CaMn4O5] cluster. Residues 197 to 218 form a helical membrane-spanning segment; the sequence is FHMLGVAGVFGGSLFSAMHGSL. His198 lines the chlorophyll a pocket. A quinone is bound by residues His215 and 264–265; that span reads SF. Residue His215 coordinates Fe cation. Residue His272 participates in Fe cation binding. The helical transmembrane segment at 274–288 threads the bilayer; sequence FLAAWPVVGIWFTAL. His332, Glu333, Asp342, and Ala344 together coordinate [CaMn4O5] cluster. Residues 345–353 constitute a propeptide that is removed on maturation; sequence VVEAPAVNG.

It belongs to the reaction center PufL/M/PsbA/D family. As to quaternary structure, PSII is composed of 1 copy each of membrane proteins PsbA, PsbB, PsbC, PsbD, PsbE, PsbF, PsbH, PsbI, PsbJ, PsbK, PsbL, PsbM, PsbT, PsbX, PsbY, PsbZ, Psb30/Ycf12, at least 3 peripheral proteins of the oxygen-evolving complex and a large number of cofactors. It forms dimeric complexes. It depends on The D1/D2 heterodimer binds P680, chlorophylls that are the primary electron donor of PSII, and subsequent electron acceptors. It shares a non-heme iron and each subunit binds pheophytin, quinone, additional chlorophylls, carotenoids and lipids. D1 provides most of the ligands for the Mn4-Ca-O5 cluster of the oxygen-evolving complex (OEC). There is also a Cl(-1) ion associated with D1 and D2, which is required for oxygen evolution. The PSII complex binds additional chlorophylls, carotenoids and specific lipids. as a cofactor. Tyr-161 forms a radical intermediate that is referred to as redox-active TyrZ, YZ or Y-Z. In terms of processing, C-terminally processed by CTPA; processing is essential to allow assembly of the oxygen-evolving complex and thus photosynthetic growth.

The protein resides in the plastid. It localises to the chloroplast thylakoid membrane. It catalyses the reaction 2 a plastoquinone + 4 hnu + 2 H2O = 2 a plastoquinol + O2. Photosystem II (PSII) is a light-driven water:plastoquinone oxidoreductase that uses light energy to abstract electrons from H(2)O, generating O(2) and a proton gradient subsequently used for ATP formation. It consists of a core antenna complex that captures photons, and an electron transfer chain that converts photonic excitation into a charge separation. The D1/D2 (PsbA/PsbD) reaction center heterodimer binds P680, the primary electron donor of PSII as well as several subsequent electron acceptors. The polypeptide is Photosystem II protein D1 (Chlorella vulgaris (Green alga)).